The sequence spans 90 residues: uncharacterized protein (90 aa).

The segment at 13-34 is disordered; that stretch reads APEGMGPHHAASSSHHSAQHHH. Residues 52 to 72 traverse the membrane as a helical segment; the sequence is YKMWFLYALILALIFGVFMWW.

It localises to the host membrane. This is an uncharacterized protein from Invertebrate iridescent virus 3 (IIV-3).